The chain runs to 512 residues: MEERKQKVVVVGAGPVGSLAALYAANRGHDVEIYELRGDLRDPSTTPLNFTRSINLALSERGLNAMRHANQPRLIDYVKGVTIPMRGRMIHGKRPDGKLYEEAQDYDIHGRSILAIDRGDLNKRLLDMLEEMPNVTFFFNHKLTGADFKRNKAWFENKDESTSNPRDRAREIEVDFDFMIGADGAHSAVRYHLMKFSRMDYQQEYIDTLWCEFQIAPSSSSAKSKFRISPNHLHIWPGKEFMFIAIPSNDGSFTCTLFAPAAIYEQLEEAGRTGDTSSSIPEFFDMHFPGVTSLIAPADLIAQFQTNPHLPLISIKCKPYHFSSSVVIVGDAAHAMVPFYGQGMNAGLEDVRILFDILDKHDRMTNDDSSLEASQRELALAEYSAVRVADAHAINDLALQNYIEMRSSVLSPVYRWRKALEEWLSVYVPSLGWQTKYSRVSFGNERYSEVVKKSERQGQVLLRSLVGGVGLPMLAGGLFLWFRYKGALGRAAYGVFYNCMGMVCRTIHGRRR.

Belongs to the aromatic-ring hydroxylase family. KMO subfamily. The cofactor is FAD.

The protein localises to the mitochondrion outer membrane. The enzyme catalyses L-kynurenine + NADPH + O2 + H(+) = 3-hydroxy-L-kynurenine + NADP(+) + H2O. Its pathway is cofactor biosynthesis; NAD(+) biosynthesis; quinolinate from L-kynurenine: step 1/3. Catalyzes the hydroxylation of L-kynurenine (L-Kyn) to form 3-hydroxy-L-kynurenine (L-3OHKyn). Required for synthesis of quinolinic acid. The protein is Kynurenine 3-monooxygenase (nic-3) of Neurospora crassa (strain ATCC 24698 / 74-OR23-1A / CBS 708.71 / DSM 1257 / FGSC 987).